The primary structure comprises 157 residues: 3-hydroxyacyl-[acyl-carrier-protein] dehydratase FabZ (157 aa).

Residue H58 is part of the active site.

It belongs to the thioester dehydratase family. FabZ subfamily.

It is found in the cytoplasm. The catalysed reaction is a (3R)-hydroxyacyl-[ACP] = a (2E)-enoyl-[ACP] + H2O. Involved in unsaturated fatty acids biosynthesis. Catalyzes the dehydration of short chain beta-hydroxyacyl-ACPs and long chain saturated and unsaturated beta-hydroxyacyl-ACPs. The chain is 3-hydroxyacyl-[acyl-carrier-protein] dehydratase FabZ from Rhizobium rhizogenes (strain K84 / ATCC BAA-868) (Agrobacterium radiobacter).